Here is a 712-residue protein sequence, read N- to C-terminus: Polyribonucleotide nucleotidyltransferase (712 aa).

The Mg(2+) site is built by Asp485 and Asp491. One can recognise a KH domain in the interval 552-615; the sequence is PRIHTIKINP…EAIRRIEAIT (64 aa). The S1 motif domain maps to 621–689; the sequence is NRIYEGKVVR…RQGRVRLSIK (69 aa).

The protein belongs to the polyribonucleotide nucleotidyltransferase family. Component of the RNA degradosome, which is a multiprotein complex involved in RNA processing and mRNA degradation. Mg(2+) is required as a cofactor.

It is found in the cytoplasm. The catalysed reaction is RNA(n+1) + phosphate = RNA(n) + a ribonucleoside 5'-diphosphate. In terms of biological role, involved in mRNA degradation. Catalyzes the phosphorolysis of single-stranded polyribonucleotides processively in the 3'- to 5'-direction. This Aeromonas hydrophila subsp. hydrophila (strain ATCC 7966 / DSM 30187 / BCRC 13018 / CCUG 14551 / JCM 1027 / KCTC 2358 / NCIMB 9240 / NCTC 8049) protein is Polyribonucleotide nucleotidyltransferase.